The sequence spans 97 residues: Defensin alpha 4 (97 aa).

Residues 1–19 form the signal peptide; it reads MRIIAILAAILLVALQVRA. Positions 20 to 63 are excised as a propeptide; that stretch reads GPLQARGDEAPGQEQRGPEDQDISISFAWDKSSALQVSGSTRGM. Disulfide bonds link Cys65-Cys93, Cys67-Cys82, and Cys72-Cys92. A propeptide is located at residue Asp97.

The protein belongs to the alpha-defensin family. Homodimer; homodimerization seems to be required for killing S.aureus, but not E.coli. Interacts with CD4. Interacts with Bacillus anthracis lef; homodimerization is required for the interaction. Post-translationally, the three-dimensional structure formed by the three intramolecular disulfide bridges is indispensable for effective bacterial killing.

It localises to the secreted. Its subcellular location is the cytoplasmic vesicle. The protein resides in the secretory vesicle. Host-defense peptide that has antimicrobial activity against Gram-negative bacteria, and to a lesser extent also against Gram-positive bacteria and fungi. Exhibits antimicrobial activity against Gram-negative E.coli and E.aerogenes and Gram-positive S.faecalis, S.aureus and B.cereus and the yeast C.albicans (in vitro). Inhibits corticotropin (ACTH)-stimulated corticosterone production (in vitro). Inhibits enzymatic activity of B.anthracis lef/anthrax lethal factor (in vitro). The polypeptide is Defensin alpha 4 (DEFA4) (Pan troglodytes (Chimpanzee)).